A 198-amino-acid polypeptide reads, in one-letter code: Glycerol-3-phosphate acyltransferase (198 aa).

6 helical membrane-spanning segments follow: residues 1 to 21 (MNLLILFFGYLFGSFPSGYLA), 53 to 73 (IIVFLLDVFKGVLSILLAKYL), 79 to 99 (WQVAIGLSTLIGHIWPVWLNW), 111 to 131 (IFLGLSWQVGLATLGVFIIMI), 136 to 156 (IVSLASVSASLALPLIMFLSF), and 158 to 178 (GSNISLPFLIVSLLAMLLVIW).

This sequence belongs to the PlsY family. Probably interacts with PlsX.

It is found in the cell inner membrane. The catalysed reaction is an acyl phosphate + sn-glycerol 3-phosphate = a 1-acyl-sn-glycero-3-phosphate + phosphate. Its pathway is lipid metabolism; phospholipid metabolism. Its function is as follows. Catalyzes the transfer of an acyl group from acyl-phosphate (acyl-PO(4)) to glycerol-3-phosphate (G3P) to form lysophosphatidic acid (LPA). This enzyme utilizes acyl-phosphate as fatty acyl donor, but not acyl-CoA or acyl-ACP. In Prochlorococcus marinus (strain NATL1A), this protein is Glycerol-3-phosphate acyltransferase.